The chain runs to 161 residues: Ribosome maturation factor RimP (161 aa).

The protein belongs to the RimP family.

The protein localises to the cytoplasm. In terms of biological role, required for maturation of 30S ribosomal subunits. In Rickettsia rickettsii (strain Iowa), this protein is Ribosome maturation factor RimP.